The sequence spans 207 residues: Large ribosomal subunit protein uL4 (207 aa).

The interval 57-78 (VAGGGKKPWRQKGTGRARHGSI) is disordered. Residues 63 to 77 (KPWRQKGTGRARHGS) show a composition bias toward basic residues.

This sequence belongs to the universal ribosomal protein uL4 family. Part of the 50S ribosomal subunit.

Functionally, one of the primary rRNA binding proteins, this protein initially binds near the 5'-end of the 23S rRNA. It is important during the early stages of 50S assembly. It makes multiple contacts with different domains of the 23S rRNA in the assembled 50S subunit and ribosome. Forms part of the polypeptide exit tunnel. This Onion yellows phytoplasma (strain OY-M) protein is Large ribosomal subunit protein uL4.